Reading from the N-terminus, the 206-residue chain is Large ribosomal subunit protein uL4 (206 aa).

It belongs to the universal ribosomal protein uL4 family. In terms of assembly, part of the 50S ribosomal subunit.

Its function is as follows. One of the primary rRNA binding proteins, this protein initially binds near the 5'-end of the 23S rRNA. It is important during the early stages of 50S assembly. It makes multiple contacts with different domains of the 23S rRNA in the assembled 50S subunit and ribosome. Functionally, forms part of the polypeptide exit tunnel. This is Large ribosomal subunit protein uL4 from Cereibacter sphaeroides (strain KD131 / KCTC 12085) (Rhodobacter sphaeroides).